A 179-amino-acid polypeptide reads, in one-letter code: Large ribosomal subunit protein uL5 (179 aa).

Belongs to the universal ribosomal protein uL5 family. Part of the 50S ribosomal subunit; part of the 5S rRNA/L5/L18/L25 subcomplex. Contacts the 5S rRNA and the P site tRNA. Forms a bridge to the 30S subunit in the 70S ribosome.

In terms of biological role, this is one of the proteins that bind and probably mediate the attachment of the 5S RNA into the large ribosomal subunit, where it forms part of the central protuberance. In the 70S ribosome it contacts protein S13 of the 30S subunit (bridge B1b), connecting the 2 subunits; this bridge is implicated in subunit movement. Contacts the P site tRNA; the 5S rRNA and some of its associated proteins might help stabilize positioning of ribosome-bound tRNAs. The chain is Large ribosomal subunit protein uL5 from Buchnera aphidicola subsp. Acyrthosiphon pisum (strain APS) (Acyrthosiphon pisum symbiotic bacterium).